The chain runs to 443 residues: Protein king tubby (443 aa).

Disordered regions lie at residues 57 to 80 and 98 to 191; these read TNGS…NNMR and HELE…EGDV. Over residues 67-80 the composition is skewed to polar residues; the sequence is VAMNTSRNHSNNMR. Low complexity predominate over residues 113–128; the sequence is QQQQSASHSANSTQSQ. Residue Ser-136 is modified to Phosphoserine. Gly residues predominate over residues 177-186; sequence NGTGNGTGGE.

This sequence belongs to the TUB family.

The protein resides in the cytoplasm. The protein localises to the nucleus. It localises to the cell projection. It is found in the cilium membrane. Its subcellular location is the rhabdomere. In Drosophila sechellia (Fruit fly), this protein is Protein king tubby.